We begin with the raw amino-acid sequence, 352 residues long: Replication factor C subunit 5 (352 aa).

Belongs to the activator 1 small subunits family. As to quaternary structure, heteropentamer of subunits rfc1, rfc2, rfc3, rfc4 and rfc5 that forms a complex with PCNA in the presence of ATP.

The protein resides in the nucleus. Its function is as follows. The elongation of primed DNA templates by DNA polymerase delta and epsilon requires the action of the accessory proteins proliferating cell nuclear antigen (PCNA) and activator 1. The polypeptide is Replication factor C subunit 5 (Neurospora crassa (strain ATCC 24698 / 74-OR23-1A / CBS 708.71 / DSM 1257 / FGSC 987)).